Here is a 298-residue protein sequence, read N- to C-terminus: UPF0282 protein Kcr_0286 (298 aa).

Belongs to the UPF0282 family.

This is UPF0282 protein Kcr_0286 from Korarchaeum cryptofilum (strain OPF8).